We begin with the raw amino-acid sequence, 278 residues long: Small ribosomal subunit protein uS2 (278 aa).

The disordered stretch occupies residues 235-278 (AEAAEEAPKRERKAKAAVKKERTKKEDDDALNANVAGKFAKDEE). The span at 252–261 (VKKERTKKED) shows a compositional bias: basic and acidic residues.

The protein belongs to the universal ribosomal protein uS2 family.

In Parabacteroides distasonis (strain ATCC 8503 / DSM 20701 / CIP 104284 / JCM 5825 / NCTC 11152), this protein is Small ribosomal subunit protein uS2.